We begin with the raw amino-acid sequence, 500 residues long: ADP,ATP carrier protein 5 (500 aa).

11 helical membrane-spanning segments follow: residues 21–41 (IYNYELGKFIPMSALMFCILF), 62–82 (IAGFAKVYCVTPAAALFVIIY), 94–114 (IFYYLTAFFIGFFVLFAFVIY), 149–169 (YIVYYSLAELWPNIFYVLLFW), 184–204 (FYTLFSLFGNSSLILVGFLMM), 224–244 (ITLVQISTILVTIVAVICCLL), 287–307 (LWLLLICSAAFGFAINLVEAV), 328–348 (LYILWTGVAIMVMTIIGNNVM), 357–377 (AVISPVIIMVTGVLFFVLIVF), 381–401 (ILSLFDGAILMSPLALAVSIG), and 469–489 (SISPVLMVVFTFVCLAWIYAV).

It belongs to the ADP/ATP translocase tlc family.

Its subcellular location is the cell membrane. Functionally, provides the rickettsial cell with host ATP in exchange for rickettsial ADP. This is an obligate exchange system. This energy acquiring activity is an important component of rickettsial parasitism. This chain is ADP,ATP carrier protein 5 (tlcE), found in Rickettsia bellii (strain RML369-C).